Reading from the N-terminus, the 323-residue chain is Cyclin-dependent kinase 1 (323 aa).

Residues 4–306 form the Protein kinase domain; the sequence is YQKIEKIGEG…AKQACMHPYF (303 aa). ATP-binding positions include 10-18 and lysine 34; that span reads IGEGTYGVV. Threonine 14 carries the phosphothreonine modification. A Phosphotyrosine modification is found at tyrosine 15. Aspartate 147 serves as the catalytic Proton acceptor. A Phosphothreonine; by CAK modification is found at threonine 180.

The protein belongs to the protein kinase superfamily. CMGC Ser/Thr protein kinase family. CDC2/CDKX subfamily. In terms of assembly, forms a stable but non-covalent complex with a regulatory subunit (SUC1) and with a cyclin.

The catalysed reaction is L-seryl-[protein] + ATP = O-phospho-L-seryl-[protein] + ADP + H(+). It carries out the reaction L-threonyl-[protein] + ATP = O-phospho-L-threonyl-[protein] + ADP + H(+). Its activity is regulated as follows. Phosphorylation at Thr-14 or Tyr-15 inactivates the enzyme, while phosphorylation at Thr-180 activates it. Its function is as follows. Cyclin-dependent kinase that acts as a master regulator of the mitotic and meiotic cell cycles. In Emericella nidulans (strain FGSC A4 / ATCC 38163 / CBS 112.46 / NRRL 194 / M139) (Aspergillus nidulans), this protein is Cyclin-dependent kinase 1.